Consider the following 57-residue polypeptide: Thiocillin GE37468 (57 aa).

A propeptide spans 1–42 (MGNNEEYFIDVNDLSIDVFDVVEQGGAVTALTADHGMPEVGA) (removed in mature form). The 5-methyloxazole-4-carboxylic acid (Ser-Thr) cross-link spans 43–44 (ST). The segment at residues 43–52 (STNCFCYICC) is a cross-link (pyridine-2,5-dicarboxylic acid (Ser-Cys) (with S-53)). Residues 43–53 (STNCFCYICCS) constitute a cross-link (pyridine-2,5-dicarboxylic acid (Ser-Ser) (with C-52)). The thiazole-4-carboxylic acid (Asn-Cys) cross-link spans 45-46 (NC). Residues 47-48 (FC) constitute a cross-link (thiazoline-4-carboxylic acid (Phe-Cys)). At isoleucine 50 the chain carries 5-hydroxy-3-methylproline (Ile). Residues 50–51 (IC) constitute a cross-link (thiazole-4-carboxylic acid (Ile-Cys)). The thiazole-4-carboxylic acid (Cys-Cys) cross-link spans 51–52 (CC). The thiazole-4-carboxylic acid (Ser-Cys) cross-link spans 53–54 (SC). Residues serine 55 and serine 56 each carry the 2,3-didehydroalanine (Ser) modification. A propeptide (removed in mature form) is located at residue asparagine 57.

In terms of processing, maturation of thiazole and oxazole containing antibiotics involves the enzymatic condensation of a Cys, Ser or Thr with the alpha-carbonyl of the preceding amino acid to form a thioether or ether bond, then dehydration to form a double bond with the alpha-amino nitrogen. Thiazoline or oxazoline ring are dehydrogenated to form thiazole or oxazole rings. Post-translationally, maturation of pyridinyl containing antibiotics involves the cross-linking of a Ser and a Cys-Ser pair usually separated by 7 or 8 residues along the peptide chain. The Ser residues are dehydrated to didehydroalanines, then bonded between their beta carbons. The alpha carbonyl of the Cys condenses with alpha carbon of the first Ser to form a pyridinyl ring. The ring may be multiply dehydrogenated to form a pyridine ring with loss of the amino nitrogen of the first Ser.

The protein localises to the secreted. Its function is as follows. Has bacteriocidal activity against both aerobic and anaerobic Gram-positive bacteria. Inhibits growth of B.subtilis (MIC=0.047 ug/ml) and methicillin-resistant S.aureus (MRSA) (MIC=0.047 ug/ml). Has poor activity against Gram-negative bacteria, with the exception of B.fragilis. Inhibits bacterial protein biosynthesis by acting on elongation factor Tu (EF-Tu). Full antibiotic activity depends on the presence of the modified residue Ile-50. The sequence is that of Thiocillin GE37468 (getA) from Streptomyces sp.